The primary structure comprises 419 residues: UPF0229 protein Tbd_1233 (419 aa).

The interval 85–108 is disordered; it reads GDRIDRPAGEGGGGSGGSPDGEGM. The span at 93–104 shows a compositional bias: gly residues; sequence GEGGGGSGGSPD.

It belongs to the UPF0229 family.

The protein is UPF0229 protein Tbd_1233 of Thiobacillus denitrificans (strain ATCC 25259 / T1).